The sequence spans 359 residues: Probable dual-specificity RNA methyltransferase RlmN (359 aa).

Glu91 (proton acceptor) is an active-site residue. Positions 97–329 constitute a Radical SAM core domain; sequence QHYGHSVCVT…KKNGVNCVVR (233 aa). Cys104 and Cys340 are oxidised to a cystine. Residues Cys111, Cys115, and Cys118 each contribute to the [4Fe-4S] cluster site. S-adenosyl-L-methionine is bound by residues 163 to 164, Ser195, 218 to 220, and Asn296; these read GE and SLH. The active-site S-methylcysteine intermediate is Cys340.

It belongs to the radical SAM superfamily. RlmN family. [4Fe-4S] cluster serves as cofactor.

The protein localises to the cytoplasm. It catalyses the reaction adenosine(2503) in 23S rRNA + 2 reduced [2Fe-2S]-[ferredoxin] + 2 S-adenosyl-L-methionine = 2-methyladenosine(2503) in 23S rRNA + 5'-deoxyadenosine + L-methionine + 2 oxidized [2Fe-2S]-[ferredoxin] + S-adenosyl-L-homocysteine. It carries out the reaction adenosine(37) in tRNA + 2 reduced [2Fe-2S]-[ferredoxin] + 2 S-adenosyl-L-methionine = 2-methyladenosine(37) in tRNA + 5'-deoxyadenosine + L-methionine + 2 oxidized [2Fe-2S]-[ferredoxin] + S-adenosyl-L-homocysteine. Specifically methylates position 2 of adenine 2503 in 23S rRNA and position 2 of adenine 37 in tRNAs. The sequence is that of Probable dual-specificity RNA methyltransferase RlmN from Streptococcus pyogenes serotype M3 (strain ATCC BAA-595 / MGAS315).